Here is a 1723-residue protein sequence, read N- to C-terminus: Probable outer membrane protein pmp20 (1723 aa).

The N-terminal stretch at M1 to G21 is a signal peptide. 2 disordered regions span residues V78 to T100 and L139 to A161. Low complexity-rich tracts occupy residues S85–T100 and S140–A161. The region spanning E1434–F1723 is the Autotransporter domain.

Belongs to the PMP outer membrane protein family.

It localises to the secreted. It is found in the cell wall. The protein localises to the cell outer membrane. The protein is Probable outer membrane protein pmp20 (pmp20) of Chlamydia pneumoniae (Chlamydophila pneumoniae).